A 448-amino-acid chain; its full sequence is uncharacterized protein (448 aa).

Residues 187 to 198 (SKGDRGDADDRG) are compositionally biased toward basic and acidic residues. 3 disordered regions span residues 187–221 (SKGD…LPTR), 243–270 (LQVP…GATM), and 291–361 (LSGL…LPNG). Over residues 243–261 (LQVPGGTSAAIPSASSTPS) the composition is skewed to low complexity. The span at 307-334 (FDERGQEVRDPADYEHSNEPDERRADDR) shows a compositional bias: basic and acidic residues.

To M.tuberculosis Rv0025 and Rv0739.

This is an uncharacterized protein from Mycobacterium tuberculosis (strain ATCC 25618 / H37Rv).